The chain runs to 255 residues: NAD kinase (255 aa).

The active-site Proton acceptor is aspartate 44. NAD(+)-binding positions include 44 to 45, histidine 49, 114 to 115, aspartate 144, alanine 152, 155 to 160, and glutamine 216; these read DG, NE, and SAYNLS.

The protein belongs to the NAD kinase family. A divalent metal cation is required as a cofactor.

It localises to the cytoplasm. It carries out the reaction NAD(+) + ATP = ADP + NADP(+) + H(+). Functionally, involved in the regulation of the intracellular balance of NAD and NADP, and is a key enzyme in the biosynthesis of NADP. Catalyzes specifically the phosphorylation on 2'-hydroxyl of the adenosine moiety of NAD to yield NADP. The chain is NAD kinase from Rickettsia canadensis (strain McKiel).